The primary structure comprises 153 residues: Histone H2B.3 (153 aa).

Composition is skewed to basic and acidic residues over residues methionine 1–proline 28 and glutamate 36–lysine 53. The tract at residues methionine 1–lysine 61 is disordered. N6-acetyllysine is present on residues lysine 7 and lysine 37. Lysine 149 is covalently cross-linked (Glycyl lysine isopeptide (Lys-Gly) (interchain with G-Cter in ubiquitin)).

The protein belongs to the histone H2B family. In terms of assembly, the nucleosome is a histone octamer containing two molecules each of H2A, H2B, H3 and H4 assembled in one H3-H4 heterotetramer and two H2A-H2B heterodimers. The octamer wraps approximately 147 bp of DNA. In terms of processing, can be acetylated to form H2BK6ac and H2BK33ac. Monoubiquitinated by BRE1 to form H2BK143ub1 and deubiquitinated by UBP26. Required for heterochromatic histone H3 di- and trimethylation at H3K4me. May give a specific tag for epigenetic transcriptional activation.

It localises to the nucleus. Its subcellular location is the chromosome. Functionally, core component of nucleosome. Nucleosomes wrap and compact DNA into chromatin, limiting DNA accessibility to the cellular machineries which require DNA as a template. Histones thereby play a central role in transcription regulation, DNA repair, DNA replication and chromosomal stability. DNA accessibility is regulated via a complex set of post-translational modifications of histones, also called histone code, and nucleosome remodeling. This chain is Histone H2B.3 (H2B.3), found in Oryza sativa subsp. japonica (Rice).